The primary structure comprises 416 residues: Xyloglucan O-acetyltransferase 1 (416 aa).

The Cytoplasmic segment spans residues 1–14 (MGLNEQQNVPSQRK). A helical; Signal-anchor for type II membrane protein transmembrane segment spans residues 15-35 (IIVFIVLAFIPIALFRLCFNN). Topologically, residues 36-416 (PFSSIKDTSL…MIEMLRRWKV (381 aa)) are lumenal. 4 cysteine pairs are disulfide-bonded: cysteine 79-cysteine 129, cysteine 100-cysteine 165, cysteine 109-cysteine 395, and cysteine 318-cysteine 391. Asparagine 96 is a glycosylation site (N-linked (GlcNAc...) asparagine). The GDS motif motif lies at 152–154 (GDS). The Nucleophile role is filled by serine 154. Residues asparagine 194, asparagine 269, and asparagine 319 are each glycosylated (N-linked (GlcNAc...) asparagine). Aspartate 390 serves as the catalytic Proton donor. A DXXH motif motif is present at residues 390–393 (DCLH). The Proton acceptor role is filled by histidine 393.

This sequence belongs to the PC-esterase family. TBL subfamily.

It is found in the golgi apparatus membrane. Xyloglucan acetyltransferase that catalyzes the acetylation of fucosylated Gal residues on xyloglucan side chains. Predominantly catalyze 6-O-monoacetylation of Gal residues in the Fuc-Gal-Xyl trisaccharide side chains of xyloglucan oligomers. Involved in xyloglucan specific O-acetylation in roots and rosette leaves. The sequence is that of Xyloglucan O-acetyltransferase 1 from Arabidopsis thaliana (Mouse-ear cress).